Reading from the N-terminus, the 112-residue chain is Small ribosomal subunit protein bS6 (112 aa).

The protein belongs to the bacterial ribosomal protein bS6 family.

Functionally, binds together with bS18 to 16S ribosomal RNA. The sequence is that of Small ribosomal subunit protein bS6 from Christiangramia forsetii (strain DSM 17595 / CGMCC 1.15422 / KT0803) (Gramella forsetii).